The following is an 873-amino-acid chain: Disks large homolog 1 (873 aa).

The region spanning 4-64 (RQKDAQRALQ…YYEVSLQDTE (61 aa)) is the L27 domain. The tract at residues 62–135 (DTEDKPIEDS…SPHIPGDARP (74 aa)) is disordered. The span at 63-77 (TEDKPIEDSSLKSRE) shows a compositional bias: basic and acidic residues. The segment covering 85–96 (WNLSVPPSTTGP) has biased composition (polar residues). PDZ domains lie at 230 to 317 (EITL…RRRK) and 325 to 412 (DVKL…AKPT). The segment covering 441–456 (SYLSQPLTPATPSRYS) has biased composition (polar residues). The segment at 441-464 (SYLSQPLTPATPSRYSPVSKGMLG) is disordered. Positions 474 to 555 (KIVLHRGTTG…TVTIIAQYRP (82 aa)) constitute a PDZ 3 domain. Residues 636–662 (NKDSGEQDTSDVDQHVTSNASDSESSF) are disordered. Positions 650 to 662 (HVTSNASDSESSF) are enriched in polar residues. In terms of domain architecture, Guanylate kinase-like spans 683 to 858 (SRPVIILGPM…IYNQVKQIIE (176 aa)).

This sequence belongs to the MAGUK family.

It localises to the cell membrane. It is found in the endoplasmic reticulum membrane. The protein localises to the cell junction. Its subcellular location is the apical cell membrane. In terms of biological role, essential multidomain scaffolding protein required for normal development. Recruits channels, receptors and signaling molecules to discrete plasma membrane domains in polarized cells. Promotes epithelial cell layer barrier function via maintaining cell-cell adhesion. May play a role in adherens junction assembly, signal transduction and cell proliferation. May play a role in synapse assembly and function. The chain is Disks large homolog 1 (dlg1) from Danio rerio (Zebrafish).